The chain runs to 352 residues: Protein RecA (352 aa).

Position 65 to 72 (65 to 72) interacts with ATP; it reads GPESSGKT. Positions 333–352 are disordered; sequence VKAAANREPVEEVEEADTDI. The segment covering 343–352 has biased composition (acidic residues); that stretch reads EEVEEADTDI.

The protein belongs to the RecA family.

It is found in the cytoplasm. In terms of biological role, can catalyze the hydrolysis of ATP in the presence of single-stranded DNA, the ATP-dependent uptake of single-stranded DNA by duplex DNA, and the ATP-dependent hybridization of homologous single-stranded DNAs. It interacts with LexA causing its activation and leading to its autocatalytic cleavage. The protein is Protein RecA of Pseudomonas fluorescens.